Reading from the N-terminus, the 209-residue chain is Protein GrpE (209 aa).

Composition is skewed to basic and acidic residues over residues 1-16 and 34-44; these read MKKS…KEES and KAGEKTAEPEK. Positions 1–61 are disordered; sequence MKKSTKKEST…EKSPEAACRE (61 aa).

The protein belongs to the GrpE family. In terms of assembly, homodimer.

Its subcellular location is the cytoplasm. Its function is as follows. Participates actively in the response to hyperosmotic and heat shock by preventing the aggregation of stress-denatured proteins, in association with DnaK and GrpE. It is the nucleotide exchange factor for DnaK and may function as a thermosensor. Unfolded proteins bind initially to DnaJ; upon interaction with the DnaJ-bound protein, DnaK hydrolyzes its bound ATP, resulting in the formation of a stable complex. GrpE releases ADP from DnaK; ATP binding to DnaK triggers the release of the substrate protein, thus completing the reaction cycle. Several rounds of ATP-dependent interactions between DnaJ, DnaK and GrpE are required for fully efficient folding. In Methanosarcina acetivorans (strain ATCC 35395 / DSM 2834 / JCM 12185 / C2A), this protein is Protein GrpE.